We begin with the raw amino-acid sequence, 197 residues long: Holliday junction branch migration complex subunit RuvA (197 aa).

A domain I region spans residues 1–64; it reads MIASVRGTLI…EDALTLYGFK (64 aa). The domain II stretch occupies residues 65–145; sequence TVEQRQLFET…GLPVAPGVSP (81 aa). The flexible linker stretch occupies residues 146–153; it reads AVAAVNAE. The segment at 153–197 is domain III; the sequence is ELSEMLVSLGFSSAEASTAIAALPPDAPLDLEERLRLALRYFGAR.

It belongs to the RuvA family. Homotetramer. Forms an RuvA(8)-RuvB(12)-Holliday junction (HJ) complex. HJ DNA is sandwiched between 2 RuvA tetramers; dsDNA enters through RuvA and exits via RuvB. An RuvB hexamer assembles on each DNA strand where it exits the tetramer. Each RuvB hexamer is contacted by two RuvA subunits (via domain III) on 2 adjacent RuvB subunits; this complex drives branch migration. In the full resolvosome a probable DNA-RuvA(4)-RuvB(12)-RuvC(2) complex forms which resolves the HJ.

The protein localises to the cytoplasm. In terms of biological role, the RuvA-RuvB-RuvC complex processes Holliday junction (HJ) DNA during genetic recombination and DNA repair, while the RuvA-RuvB complex plays an important role in the rescue of blocked DNA replication forks via replication fork reversal (RFR). RuvA specifically binds to HJ cruciform DNA, conferring on it an open structure. The RuvB hexamer acts as an ATP-dependent pump, pulling dsDNA into and through the RuvAB complex. HJ branch migration allows RuvC to scan DNA until it finds its consensus sequence, where it cleaves and resolves the cruciform DNA. This chain is Holliday junction branch migration complex subunit RuvA, found in Roseiflexus castenholzii (strain DSM 13941 / HLO8).